A 364-amino-acid chain; its full sequence is Histidinol-phosphate aminotransferase 1 (364 aa).

Lys211 is modified (N6-(pyridoxal phosphate)lysine).

It belongs to the class-II pyridoxal-phosphate-dependent aminotransferase family. Histidinol-phosphate aminotransferase subfamily. As to quaternary structure, homodimer. Requires pyridoxal 5'-phosphate as cofactor.

It carries out the reaction L-histidinol phosphate + 2-oxoglutarate = 3-(imidazol-4-yl)-2-oxopropyl phosphate + L-glutamate. The protein operates within amino-acid biosynthesis; L-histidine biosynthesis; L-histidine from 5-phospho-alpha-D-ribose 1-diphosphate: step 7/9. The sequence is that of Histidinol-phosphate aminotransferase 1 from Legionella pneumophila subsp. pneumophila (strain Philadelphia 1 / ATCC 33152 / DSM 7513).